Reading from the N-terminus, the 336-residue chain is MSRVTLSRYLIEQTRSNNTPADLRFLIEVVARACKEISHAVSKGALGGVLGSMGTENVQGEVQKKLDVISNEILLEANEWGGHLAGMASEEMDNAYQIPGKYPKGAYLLVFDPLDGSSNIDINAPVGTIFSVLRCPNEYLSQNEALNEKAFLQPGTQQVAAGYAIYGPQTMLVLTLGDGVKGFTLDREMGSFVLTHEDIKIPESTQEFAINMSNERHWEAPVKRYVEELLAGDTGPLKKNYNMRWVAAMVADVHRILTRGGLFMYPRDSREPEKPGKLRLMYEANPMSFLVEQAGGASTDGHKRILDIQPEGLHQRVAVFLGSKEEVARVTGYHKE.

Mg(2+)-binding residues include Glu-90, Asp-112, Leu-114, and Asp-115. Residues 115-118, Asn-211, and Lys-277 each bind substrate; that span reads DGSS. A Mg(2+)-binding site is contributed by Glu-283.

The protein belongs to the FBPase class 1 family. In terms of assembly, homotetramer. Requires Mg(2+) as cofactor.

It is found in the cytoplasm. It carries out the reaction beta-D-fructose 1,6-bisphosphate + H2O = beta-D-fructose 6-phosphate + phosphate. Its pathway is carbohydrate biosynthesis; gluconeogenesis. The polypeptide is Fructose-1,6-bisphosphatase class 1 (Pseudomonas fluorescens (strain ATCC BAA-477 / NRRL B-23932 / Pf-5)).